A 752-amino-acid polypeptide reads, in one-letter code: DNA topoisomerase 4 subunit A (752 aa).

A Topo IIA-type catalytic domain is found at 31–494 (LPFIGDGLKP…EAKAMSEHDM (464 aa)). Tyrosine 120 (O-(5'-phospho-DNA)-tyrosine intermediate) is an active-site residue. Disordered stretches follow at residues 472-492 (YGDD…MSEH) and 718-752 (TGER…DSEE). 2 stretches are compositionally biased toward basic and acidic residues: residues 473–492 (GDDR…MSEH) and 732–743 (QRIDRVEIDSPR).

Belongs to the type II topoisomerase GyrA/ParC subunit family. ParC type 1 subfamily. As to quaternary structure, heterotetramer composed of ParC and ParE.

Its subcellular location is the cell membrane. It carries out the reaction ATP-dependent breakage, passage and rejoining of double-stranded DNA.. In terms of biological role, topoisomerase IV is essential for chromosome segregation. It relaxes supercoiled DNA. Performs the decatenation events required during the replication of a circular DNA molecule. This is DNA topoisomerase 4 subunit A from Escherichia coli O157:H7.